The primary structure comprises 223 residues: Guanylate kinase (223 aa).

A disordered region spans residues 1 to 22 (MTADGGPDVRHGTRPEPSGDGR). Residues 7–19 (PDVRHGTRPEPSG) show a composition bias toward basic and acidic residues. One can recognise a Guanylate kinase-like domain in the interval 21–201 (GRVVVLSGPS…ACAELVSLLV (181 aa)). Residue 28–35 (GPSAVGKS) coordinates ATP. The segment at 204–223 (APDRHDTSGRTGRQTTSHPD) is disordered. Polar residues predominate over residues 212–223 (GRTGRQTTSHPD).

The protein belongs to the guanylate kinase family.

Its subcellular location is the cytoplasm. The enzyme catalyses GMP + ATP = GDP + ADP. In terms of biological role, essential for recycling GMP and indirectly, cGMP. The protein is Guanylate kinase of Mycolicibacterium paratuberculosis (strain ATCC BAA-968 / K-10) (Mycobacterium paratuberculosis).